A 342-amino-acid chain; its full sequence is uncharacterized protein (342 aa).

This is an uncharacterized protein from Magallana gigas (Pacific oyster).